Reading from the N-terminus, the 643-residue chain is Leukocyte immunoglobulin-like receptor subfamily B member 5 (643 aa).

The N-terminal stretch at 1–23 is a signal peptide; sequence MTLTLSVLICLGLNVGPRTCVQA. Topologically, residues 24 to 458 are extracellular; it reads GTLPKPTLWA…PQSGLGRHLG (435 aa). Ig-like C2-type domains are found at residues 27 to 116, 111 to 228, 224 to 313, and 337 to 418; these read PKPT…LELV, DPLE…SLLI, PSLL…DPLD, and GENV…LVVS. C49 and C98 are oxidised to a cystine. A glycan (N-linked (GlcNAc...) asparagine) is linked at N139. 2 disulfides stabilise this stretch: C144/C195 and C244/C295. N279 and N339 each carry an N-linked (GlcNAc...) asparagine glycan. A disulfide bridge links C344 with C395. Residues 417-433 show a composition bias toward low complexity; that stretch reads VSGPSGDPSLSPTGSTP. Positions 417 to 449 are disordered; the sequence is VSGPSGDPSLSPTGSTPTPGPEDQPLTPTGLDP. A helical membrane pass occupies residues 459 to 479; the sequence is VVTGVSVAFVLLLFLLLFLLL. Residues 480-643 lie on the Cytoplasmic side of the membrane; sequence RHRHQSKHRT…PSIYAPLAIH (164 aa). The disordered stretch occupies residues 493–643; the sequence is FYRPAGAAGP…PSIYAPLAIH (151 aa). S514 carries the post-translational modification Phosphoserine. Basic and acidic residues-rich tracts occupy residues 531 to 549, 557 to 567, and 579 to 592; these read TQPK…RDED, EVKHSRPRREM, and LDTK…DRQM. The ITIM motif 1 signature appears at 605–610; the sequence is VTYAQL. A compositionally biased stretch (basic and acidic residues) spans 615-631; the sequence is LRREATEPPPSQEREPP. Positions 635 to 640 match the ITIM motif 2 motif; it reads SIYAPL.

Its subcellular location is the membrane. Its function is as follows. May act as receptor for class I MHC antigens. The sequence is that of Leukocyte immunoglobulin-like receptor subfamily B member 5 (LILRB5) from Pan troglodytes (Chimpanzee).